A 105-amino-acid polypeptide reads, in one-letter code: Large ribosomal subunit protein eL33 (105 aa).

Belongs to the eukaryotic ribosomal protein eL33 family.

The protein was found to bind to both initiator and elongator tRNAs and consequently was assigned to the P site or P and A site. The sequence is that of Large ribosomal subunit protein eL33 (rpl35a) from Dictyostelium discoideum (Social amoeba).